We begin with the raw amino-acid sequence, 292 residues long: Ribosomal RNA small subunit methyltransferase A (292 aa).

Asn-29, Leu-31, Gly-56, Glu-77, Asp-102, and Asn-127 together coordinate S-adenosyl-L-methionine.

Belongs to the class I-like SAM-binding methyltransferase superfamily. rRNA adenine N(6)-methyltransferase family. RsmA subfamily.

The protein resides in the cytoplasm. The catalysed reaction is adenosine(1518)/adenosine(1519) in 16S rRNA + 4 S-adenosyl-L-methionine = N(6)-dimethyladenosine(1518)/N(6)-dimethyladenosine(1519) in 16S rRNA + 4 S-adenosyl-L-homocysteine + 4 H(+). Its function is as follows. Specifically dimethylates two adjacent adenosines (A1518 and A1519) in the loop of a conserved hairpin near the 3'-end of 16S rRNA in the 30S particle. May play a critical role in biogenesis of 30S subunits. The chain is Ribosomal RNA small subunit methyltransferase A from Bacillus subtilis (strain 168).